Reading from the N-terminus, the 473-residue chain is MTKNIGKITQIISAVVDVKFTNNGELPEILNALECYNDKQRIVLEVAQHIGDDTVRCIAMDSTEGLVRGVEVMDTGSPICIPVGTETLGRIMNVVGEPIDGKGDIKSSNISAIYKSAPDFTNQSTERNILVTGIKVVDLLAPYIKGGKIGLFGGAGVGKTVLIMELINNVAKAHGGYTVFAGVGERTREGNDLYHEMIDSGVIDLEKPENSKVALVYGQMNAPPGARARVALSGLTIAESFRDMNGGQDVLFFVDNIFRFTQAGSEVSALLGRIPSAVGYQPTLATDMGELQERITSTKHGSITSVQAIYVPADDLTDPAPATSFAHLDATTVLSRQIAEFGIYPAVDPLDSNSQVLDPMIVGEEHYSVARQVQQVLQTYKSLQDIIAILGMDELSEEDKLTVSRARKIQRFLSQPFHVAEVFTGSEGKFVNLADTIAGFKGLVEGKYDDLPEAAFYMVGTIDEAIEKAKILK.

Residue 153–160 participates in ATP binding; the sequence is GGAGVGKT.

This sequence belongs to the ATPase alpha/beta chains family. In terms of assembly, F-type ATPases have 2 components, CF(1) - the catalytic core - and CF(0) - the membrane proton channel. CF(1) has five subunits: alpha(3), beta(3), gamma(1), delta(1), epsilon(1). CF(0) has three main subunits: a(1), b(2) and c(9-12). The alpha and beta chains form an alternating ring which encloses part of the gamma chain. CF(1) is attached to CF(0) by a central stalk formed by the gamma and epsilon chains, while a peripheral stalk is formed by the delta and b chains.

It is found in the cell inner membrane. The catalysed reaction is ATP + H2O + 4 H(+)(in) = ADP + phosphate + 5 H(+)(out). In terms of biological role, produces ATP from ADP in the presence of a proton gradient across the membrane. The catalytic sites are hosted primarily by the beta subunits. This chain is ATP synthase subunit beta, found in Rickettsia akari (strain Hartford).